Consider the following 178-residue polypeptide: MKSIEVDEELYRYIASQTQHIGESASDILRRLLMVPAEQQLEVVVPVRPKGIIVSKDAGNEHKLDRVKEMRTLLISDEFAVQGKAIGRFMMILSSLYRIDSDGFIEAAAIKGRTRVYFADNEEALLASGKTTKPKAIPETPYWVITNTNTDRKRQMVDQLMVKMNYNTDIIEKVCGVI.

The interaction with DNA stretch occupies residues 113 to 117; sequence RTRVY.

This sequence belongs to the SeqA family. As to quaternary structure, homodimer. Polymerizes to form helical filaments.

The protein localises to the cytoplasm. Negative regulator of replication initiation, which contributes to regulation of DNA replication and ensures that replication initiation occurs exactly once per chromosome per cell cycle. Binds to pairs of hemimethylated GATC sequences in the oriC region, thus preventing assembly of replication proteins and re-initiation at newly replicated origins. Repression is relieved when the region becomes fully methylated. The polypeptide is Negative modulator of initiation of replication (Photobacterium profundum (strain SS9)).